Consider the following 306-residue polypeptide: Myb family transcription factor MOF1 (306 aa).

Residues 19 to 79 (RSKVPRLRWT…HLQMYRCSRL (61 aa)) form the HTH myb-type domain. The H-T-H motif DNA-binding region spans 50-75 (PKLILQLMGVKGLTISHVKSHLQMYR).

As to quaternary structure, interacts with TPR1, TPR2 and TPR3. In terms of tissue distribution, expressed in roots, leaves, leaf sheaths, culms, panicles, lemmas, paleas, lodicules, stamens, and pistils.

Its subcellular location is the nucleus. Functionally, transcriptional repressor that plays a role in the regulation of organ identity and spikelet meristem determinacy. Interacts with the TPR corepressors to possibly repress the expression of downstream target genes. The sequence is that of Myb family transcription factor MOF1 from Oryza sativa subsp. japonica (Rice).